The sequence spans 114 residues: Tyrosine-protein phosphatase 11 (114 aa).

The Tyrosine-protein phosphatase domain maps to 1 to 114 (WRMIWEHNTR…EAKHTGPTIV (114 aa)). Asp-81 is a binding site for substrate.

Belongs to the protein-tyrosine phosphatase family.

It catalyses the reaction O-phospho-L-tyrosyl-[protein] + H2O = L-tyrosyl-[protein] + phosphate. This is Tyrosine-protein phosphatase 11 (STY-11) from Styela plicata (Wrinkled sea squirt).